A 645-amino-acid polypeptide reads, in one-letter code: Octopamine receptor Oamb (645 aa).

At M1–A25 the chain is on the extracellular side. N2 is a glycosylation site (N-linked (GlcNAc...) asparagine). Residues V26–F46 traverse the membrane as a helical segment. The Cytoplasmic portion of the chain corresponds to C47 to N56. The helical transmembrane segment at F57–S77 threads the bilayer. Residues A78 to R94 lie on the Extracellular side of the membrane. Cysteines 93 and 287 form a disulfide. A helical transmembrane segment spans residues I95–S115. Residues L116–K138 are Cytoplasmic-facing. Residues S139–W159 traverse the membrane as a helical segment. Over K160–Y295 the chain is Extracellular. N-linked (GlcNAc...) asparagine glycosylation occurs at N174. The segment at Q190–G212 is disordered. A helical transmembrane segment spans residues V296–W316. Residues R317–T520 are Cytoplasmic-facing. Disordered regions lie at residues G358–E386 and R479–G500. A compositionally biased stretch (low complexity) spans S369–P385. The helical transmembrane segment at L521–I541 threads the bilayer. Residues R542–P551 lie on the Extracellular side of the membrane. A helical membrane pass occupies residues L552–Y572. The Cytoplasmic portion of the chain corresponds to A573–R645. Residues T621–R645 form a disordered region. The span at F629–R645 shows a compositional bias: basic and acidic residues.

It belongs to the G-protein coupled receptor 1 family. Highly enriched in mushroom body neuropil and in the ellipsoid body (at protein level). Expressed in oviduct epithelium (at protein level). Expressed in the adult and larval brain, thoracic and abdominal ganglia, terminal cells of the larval tracheal system, muscle, mature eggs and reproductive system.

The protein localises to the cell membrane. Receptor for octopamine (OA) which is a neurotransmitter, neurohormone and neuromodulator in invertebrates. Stimulates intracellular accumulation of cAMP and Ca(2+) following ligand binding. Required for ovulation. Following activation on mature follicle cells by OA, induces activity of the metalloprotease Mmp2 which leads to breakdown of the posterior follicle wall, resulting in ovulation. Ligand binding probably also leads to activation of CamKII which is also required for ovulation. Modulates sleep/wake behavior by acting in neurons of the pars intercerebralis to promote wakefulness. Plays a role in courtship conditioning where the courtship behavior of males rejected by already mated females is inhibited with further females. Required in the mushroom body for appetitive olfactory learning. Specifically conveys the short-term reinforcing effects of sweet taste. In insulin-producing cells of the brain, plays a role in inhibiting transcription of insulin-like peptide Ilp3. Also plays a role in social behavior by modulating male agression. In Drosophila melanogaster (Fruit fly), this protein is Octopamine receptor Oamb.